The chain runs to 355 residues: Guanine nucleotide-binding protein G(i) subunit alpha-2 (355 aa).

Residue G2 is the site of N-myristoyl glycine attachment. C3 carries the S-palmitoyl cysteine lipid modification. The G-alpha domain maps to 32–355; that stretch reads REVKLLLLGA…KNNLKDCGLF (324 aa). Residues 35–48 form a G1 motif region; sequence KLLLLGAGESGKST. Residues 40 to 47, 176 to 182, 201 to 205, 270 to 273, and A327 contribute to the GTP site; these read GAGESGKS, LRTRVKT, DVGGQ, and NKKD. 2 residues coordinate Mg(2+): S47 and T182. The G2 motif stretch occupies residues 174–182; sequence DVLRTRVKT. The G3 motif stretch occupies residues 197–206; it reads FKMFDVGGQR. The G4 motif stretch occupies residues 266–273; the sequence is ILFLNKKD. A G5 motif region spans residues 325–330; the sequence is TCATDT.

The protein belongs to the G-alpha family. G(i/o/t/z) subfamily. G proteins are composed of 3 units; alpha, beta and gamma. The alpha chain contains the guanine nucleotide binding site. In this context, interacts with GNB2. Interacts with UNC5B. Interacts with GPSM1. Interacts with RGS12 and RGS14. Interacts (inactive GDP-bound form) with NUCB1 (via GBA motif); the interaction leads to activation of GNAI3. Interacts (inactive GDP-bound form) with CCDC88C/DAPLE (via GBA motif). Interacts (inactive GDP-bound form) with CCDC8A/GIV (via GBA motif).

The protein localises to the cytoplasm. It localises to the cell membrane. Its subcellular location is the cytoskeleton. The protein resides in the microtubule organizing center. It is found in the centrosome. The protein localises to the membrane. Guanine nucleotide-binding proteins (G proteins) are involved as modulators or transducers in various transmembrane signaling systems. The G(i) proteins are involved in hormonal regulation of adenylate cyclase: they inhibit the cyclase in response to beta-adrenergic stimuli. May play a role in cell division. This is Guanine nucleotide-binding protein G(i) subunit alpha-2 (Gnai2) from Rattus norvegicus (Rat).